The sequence spans 111 residues: Nucleoid-associated protein Cpha266_1171 (111 aa).

Belongs to the YbaB/EbfC family. As to quaternary structure, homodimer.

It localises to the cytoplasm. The protein resides in the nucleoid. Functionally, binds to DNA and alters its conformation. May be involved in regulation of gene expression, nucleoid organization and DNA protection. This is Nucleoid-associated protein Cpha266_1171 from Chlorobium phaeobacteroides (strain DSM 266 / SMG 266 / 2430).